Consider the following 100-residue polypeptide: Proline-rich protein 15-like protein (100 aa).

Residues 26–100 (PDTYTQSEGG…LFDDREGKGQ (75 aa)) form a disordered region. A compositionally biased stretch (basic and acidic residues) spans 53-62 (RLEKIVDKNT).

The protein belongs to the PRR15 family.

This is Proline-rich protein 15-like protein (PRR15L) from Bos taurus (Bovine).